A 521-amino-acid chain; its full sequence is U4/U6 small nuclear ribonucleoprotein Prp4 (521 aa).

Lys-26 bears the N6-acetyllysine mark. WD repeat units follow at residues 228–267 (GDDRPISYCHFSPNSKMLATACWSGLCKLWSVPDCNLLHT), 270–317 (GHNT…PVAD), 320–359 (GHTVRVARVMWHPSGRFLGTTCYDRSWRLWDLEAQEEILH), 362–401 (GHSMGVYDIAFHQDGSLAGTGGLDAFGRVWDLRTGRCIMF), 404–443 (GHLKEIYGINFSPNGYHIATGSGDNTCKVWDLRQRRCVYT), 446–486 (AHQN…PLKT), and 489–521 (GHEGKVMGLDISSDGQLIATCSYDRTFKLWMAE).

In terms of assembly, component of the precatalytic spliceosome (spliceosome B complex). Component of the U4/U6-U5 tri-snRNP complex, a building block of the precatalytic spliceosome (spliceosome B complex). The U4/U6-U5 tri-snRNP complex is composed of the U4, U6 and U5 snRNAs and at least PRPF3, PRPF4, PRPF6, PRPF8, PRPF31, SNRNP200, TXNL4A, SNRNP40, SNRPB, SNRPD1, SNRPD2, SNRPD3, SNRPE, SNRPF, SNRPG, DDX23, CD2BP2, PPIH, SNU13, EFTUD2, SART1 and USP39, plus LSM2, LSM3, LSM4, LSM5, LSM6, LSM7 and LSM8. Interacts directly with PRPF18, PPIH and PRPF3. Part of a heteromeric complex containing PPIH, PRPF3 and PRPF4 that is stable in the absence of RNA. Interacts with ERCC6.

It is found in the nucleus. The protein localises to the nucleus speckle. In terms of biological role, plays a role in pre-mRNA splicing as component of the U4/U6-U5 tri-snRNP complex that is involved in spliceosome assembly, and as component of the precatalytic spliceosome (spliceosome B complex). The polypeptide is U4/U6 small nuclear ribonucleoprotein Prp4 (PRPF4) (Pongo abelii (Sumatran orangutan)).